Consider the following 115-residue polypeptide: Meiotically up-regulated gene 168 protein (115 aa).

A disordered region spans residues 82–115 (SVSPVHTKAEEPGLGLTPMNSADFSNKIASRYRS). The span at 99 to 109 (PMNSADFSNKI) shows a compositional bias: polar residues.

The protein localises to the nucleus. Functionally, has a role in meiosis. This Schizosaccharomyces pombe (strain 972 / ATCC 24843) (Fission yeast) protein is Meiotically up-regulated gene 168 protein (mug168).